A 330-amino-acid polypeptide reads, in one-letter code: Poly(3-hydroxyalkanoate) polymerase subunit PhaE (330 aa).

A coiled-coil region spans residues 298 to 328 (RSEVDEIHQTIYQLRKEVKSLKKRLGETEAN).

It belongs to the PHA/PHB synthase family. Type III PhaE subfamily. In terms of assembly, forms a heterodimer with PhaC, which may multimerize in the presence of 3-hydroxybutyryl-CoA. Both subunits are required for PHB synthesis in E.coli and in PHA-negative A.eutrophus.

The protein resides in the cytoplasm. Its pathway is biopolymer metabolism; poly-(R)-3-hydroxybutanoate biosynthesis. When expressed in E.coli with Synechocystis PhaC and C.necator PhaA and PhaB, confers the ability to synthesize up to 13% (w/w) poly(3-hydroxybutyrate) (PHB) depending on the carbon source; all 4 genes are necessary for PHB production. Cell-free in vitro coexpression with PhaE gives a heterodimer able to polymerize 3-hydroxybutyrate-CoA. This subunit has no catalytic activity but enhances the activity of PhaC, the catalytic subunit. The protein is Poly(3-hydroxyalkanoate) polymerase subunit PhaE of Synechocystis sp. (strain ATCC 27184 / PCC 6803 / Kazusa).